We begin with the raw amino-acid sequence, 285 residues long: BAG family molecular chaperone regulator 2 (285 aa).

A Ubiquitin-like domain is found at arginine 37 to glutamine 113. In terms of domain architecture, BAG spans alanine 132 to lysine 210. Serine 244 is modified (phosphoserine).

In terms of assembly, binds to the ATPase domain of HSP70/HSC70 chaperones.

In terms of biological role, co-chaperone that regulates diverse cellular pathways, such as programmed cell death and stress responses. This chain is BAG family molecular chaperone regulator 2 (BAG2), found in Arabidopsis thaliana (Mouse-ear cress).